We begin with the raw amino-acid sequence, 104 residues long: Iron-sulfur cluster assembly protein CyaY (104 aa).

This sequence belongs to the frataxin family.

Involved in iron-sulfur (Fe-S) cluster assembly. May act as a regulator of Fe-S biogenesis. The protein is Iron-sulfur cluster assembly protein CyaY of Aeromonas hydrophila subsp. hydrophila (strain ATCC 7966 / DSM 30187 / BCRC 13018 / CCUG 14551 / JCM 1027 / KCTC 2358 / NCIMB 9240 / NCTC 8049).